The chain runs to 391 residues: DNA-directed RNA polymerase subunit Rpo1C (391 aa).

Belongs to the RNA polymerase beta' chain family. As to quaternary structure, part of the RNA polymerase complex.

The protein localises to the cytoplasm. The protein resides in the chromosome. It catalyses the reaction RNA(n) + a ribonucleoside 5'-triphosphate = RNA(n+1) + diphosphate. Its function is as follows. DNA-dependent RNA polymerase (RNAP) catalyzes the transcription of DNA into RNA using the four ribonucleoside triphosphates as substrates. Forms part of the jaw domain. The polypeptide is DNA-directed RNA polymerase subunit Rpo1C (Thermococcus kodakarensis (strain ATCC BAA-918 / JCM 12380 / KOD1) (Pyrococcus kodakaraensis (strain KOD1))).